The chain runs to 92 residues: MAHTRSAKKRIRQAEKRRLLNRYHISRMKTAIKRITEALKNKDIETAEKLLPLAQKLAYRAAAKGAIHKNEAARRVSRIYRKVNAAKASLSQ.

This sequence belongs to the bacterial ribosomal protein bS20 family.

Functionally, binds directly to 16S ribosomal RNA. In Persephonella marina (strain DSM 14350 / EX-H1), this protein is Small ribosomal subunit protein bS20.